The primary structure comprises 82 residues: Consomatin Ar1 (82 aa).

The signal sequence occupies residues 1 to 22; that stretch reads MQTAYWVVVMMMMVWVTAPVSE. Residues 23–60 constitute a propeptide that is removed on maturation; it reads GGKLSDVIWGLVPDDLTPQIILQILNASRHAYRRVRPR. A disulfide bond links cysteine 64 and cysteine 69. At tryptophan 66 the chain carries D-tryptophan. A 4-hydroxyproline mark is found at proline 70, proline 71, and proline 73. A propeptide spanning residues 74 to 82 is cleaved from the precursor; that stretch reads QWIHPLVKR.

This sequence belongs to the conotoxin C superfamily. Consomatin family. As to expression, expressed by the venom duct.

The protein resides in the secreted. In terms of biological role, moderately activates human somatostatin receptors (SSTR) with a preferential activation of SSTR1 and SSTR4. In vivo, does not cause behavioral changes in mice within a few minutes of intracranial injection, but causes a progressive loss of movement thereafter. Four to five hours after injection, mice recover, even with the highest dose tested. Shows antinociception and antihyperalgesia activities in two mouse models of acute pain, most probably by acting outside the central nervous system. The polypeptide is Consomatin Ar1 (Conus arenatus (Sand-dusted cone)).